The following is a 420-amino-acid chain: Serine--tRNA ligase (420 aa).

229 to 231 contributes to the L-serine binding site; it reads TAE. Residue 260–262 coordinates ATP; the sequence is RAE. L-serine is bound at residue Glu-283. 347-350 serves as a coordination point for ATP; sequence EISS. Ser-382 is a binding site for L-serine.

The protein belongs to the class-II aminoacyl-tRNA synthetase family. Type-1 seryl-tRNA synthetase subfamily. As to quaternary structure, homodimer. The tRNA molecule binds across the dimer.

It localises to the cytoplasm. The enzyme catalyses tRNA(Ser) + L-serine + ATP = L-seryl-tRNA(Ser) + AMP + diphosphate + H(+). It carries out the reaction tRNA(Sec) + L-serine + ATP = L-seryl-tRNA(Sec) + AMP + diphosphate + H(+). Its pathway is aminoacyl-tRNA biosynthesis; selenocysteinyl-tRNA(Sec) biosynthesis; L-seryl-tRNA(Sec) from L-serine and tRNA(Sec): step 1/1. Its function is as follows. Catalyzes the attachment of serine to tRNA(Ser). Is also able to aminoacylate tRNA(Sec) with serine, to form the misacylated tRNA L-seryl-tRNA(Sec), which will be further converted into selenocysteinyl-tRNA(Sec). In Caldicellulosiruptor bescii (strain ATCC BAA-1888 / DSM 6725 / KCTC 15123 / Z-1320) (Anaerocellum thermophilum), this protein is Serine--tRNA ligase.